Reading from the N-terminus, the 744-residue chain is Palmitoyltransferase ZDHHC5-A (744 aa).

A compositionally biased stretch (gly residues) spans 1 to 11 (MPSGSMSGGVS). The interval 1–25 (MPSGSMSGGVSGPTSPPHPTVPSRP) is disordered. At 1-30 (MPSGSMSGGVSGPTSPPHPTVPSRPLRPSR) the chain is on the cytoplasmic side. The chain crosses the membrane as a helical span at residues 31 to 51 (YVPVSAATAFLVGSTTLFFCF). Residues 52–61 (TCPWLSEQFS) are Extracellular-facing. Residues 62 to 82 (VAVPIYNGVMFMFVLANFCMA) traverse the membrane as a helical segment. At 83 to 167 (TFMDPGIFPR…IGRRNYRYFF (85 aa)) the chain is on the cytoplasmic side. In terms of domain architecture, DHHC spans 121–171 (KWCSTCRFYRPPRCSHCSVCDNCVEDFDHHCPWVNNCIGRRNYRYFFLFLL). Cys-151 (S-palmitoyl cysteine intermediate) is an active-site residue. Residues 168–188 (LFLLSLTAHIMGVFGFGLLFI) traverse the membrane as a helical segment. The Extracellular portion of the chain corresponds to 189-208 (LYHTQQLDRVHSAVTMAVMC). The helical transmembrane segment at 209–229 (VAGLFFIPVAGLTGFHVVLVA) threads the bilayer. The Cytoplasmic portion of the chain corresponds to 230 to 744 (RGRTTNEQVT…VGGTTYEISV (515 aa)). Disordered regions lie at residues 314 to 523 (SLEM…PVVG), 556 to 645 (QHAV…SLSY), and 664 to 744 (SVAG…EISV). The segment covering 369–393 (TYSSPGKNHTALTHAYANQSSQQPG) has biased composition (polar residues). The span at 398–413 (PSLDGREGGGAERSGA) shows a compositional bias: basic and acidic residues. A compositionally biased stretch (gly residues) spans 415–428 (RTGGGPGGPPGSGI). Over residues 460-501 (THNAPPSEATTSTSYKSLANQTPPQAARNGSLSYDSLLTPSE) the composition is skewed to polar residues. Residues 571-584 (PERERERLLHDSQA) are compositionally biased toward basic and acidic residues. Basic residues predominate over residues 585–601 (QHHHHHHHHHHHHRPPR). Low complexity-rich tracts occupy residues 621-630 (RTRSTDTTHP) and 689-723 (PKPS…SPAH). The segment covering 725–737 (PGGGVKKVTGVGG) has biased composition (gly residues).

The protein belongs to the DHHC palmitoyltransferase family. ERF2/ZDHHC9 subfamily.

It is found in the cell membrane. The catalysed reaction is L-cysteinyl-[protein] + hexadecanoyl-CoA = S-hexadecanoyl-L-cysteinyl-[protein] + CoA. Palmitoyltransferase that catalyzes the addition of palmitate onto various protein substrates and is involved in a variety of cellular processes. The sequence is that of Palmitoyltransferase ZDHHC5-A from Danio rerio (Zebrafish).